Reading from the N-terminus, the 251-residue chain is MPSRWPGVAGPPALARTEGGEGSAGHSYPQNSKGTGEQHKADRIKEGHRVYAHIAKLQELWKTTQIQTIHIPKSMTDASFLKHPELTLGQKRYLCSVAKICNSSYLRTLMKRQYMHIFHHGSQKTGVLTHHRGHMSSRYSQKQHSPCTAWRHHLEREDSLSIAAGAPEMIIHSLWRPLRHKEGLKIGYASKTRCKSLKIFRRPGRLFLLPVPSNDSQSCPSEETQEEDLLNKCMQSMSIQEQGPAHASLTV.

Positions 1–41 (MPSRWPGVAGPPALARTEGGEGSAGHSYPQNSKGTGEQHKA) are disordered.

It belongs to the FAM216 family.

This is Protein FAM216A (Fam216a) from Mus musculus (Mouse).